Consider the following 598-residue polypeptide: Ecto-NOX disulfide-thiol exchanger 2 (598 aa).

In terms of domain architecture, RRM spans 99 to 178 (KTVFVGGLPE…GRLHVDFAQA (80 aa)). Coiled coils occupy residues 264–299 (IQSA…LSGI) and 352–476 (RREE…KQEN).

Belongs to the ENOX family. Cu cation is required as a cofactor. Post-translationally, glycosylated.

It localises to the cell membrane. Its subcellular location is the secreted. It is found in the extracellular space. With respect to regulation, inhibited by the antitumor sulfonylurea LY181984, the vabilloid capsaicin, and retinoids. Functionally, may be involved in cell growth. Probably acts as a terminal oxidase of plasma electron transport from cytosolic NAD(P)H via hydroquinones to acceptors at the cell surface. Hydroquinone oxidase activity alternates with a protein disulfide-thiol interchange/oxidoreductase activity which may control physical membrane displacements associated with vesicle budding or cell enlargement. The activities oscillate with a period length of 22 minutes and play a role in control of the ultradian cellular biological clock. The chain is Ecto-NOX disulfide-thiol exchanger 2 (Enox2) from Mus musculus (Mouse).